Consider the following 232-residue polypeptide: Phosphatidylserine decarboxylase proenzyme (232 aa).

S190 (schiff-base intermediate with substrate; via pyruvic acid) is an active-site residue. S190 bears the Pyruvic acid (Ser); by autocatalysis mark.

The protein belongs to the phosphatidylserine decarboxylase family. PSD-A subfamily. In terms of assembly, heterodimer of a large membrane-associated beta subunit and a small pyruvoyl-containing alpha subunit. Pyruvate serves as cofactor. In terms of processing, is synthesized initially as an inactive proenzyme. Formation of the active enzyme involves a self-maturation process in which the active site pyruvoyl group is generated from an internal serine residue via an autocatalytic post-translational modification. Two non-identical subunits are generated from the proenzyme in this reaction, and the pyruvate is formed at the N-terminus of the alpha chain, which is derived from the carboxyl end of the proenzyme. The post-translation cleavage follows an unusual pathway, termed non-hydrolytic serinolysis, in which the side chain hydroxyl group of the serine supplies its oxygen atom to form the C-terminus of the beta chain, while the remainder of the serine residue undergoes an oxidative deamination to produce ammonia and the pyruvoyl prosthetic group on the alpha chain.

It localises to the cell membrane. The enzyme catalyses a 1,2-diacyl-sn-glycero-3-phospho-L-serine + H(+) = a 1,2-diacyl-sn-glycero-3-phosphoethanolamine + CO2. The protein operates within phospholipid metabolism; phosphatidylethanolamine biosynthesis; phosphatidylethanolamine from CDP-diacylglycerol: step 2/2. Functionally, catalyzes the formation of phosphatidylethanolamine (PtdEtn) from phosphatidylserine (PtdSer). In Methylocella silvestris (strain DSM 15510 / CIP 108128 / LMG 27833 / NCIMB 13906 / BL2), this protein is Phosphatidylserine decarboxylase proenzyme.